A 682-amino-acid polypeptide reads, in one-letter code: Glutamine--fructose-6-phosphate aminotransferase [isomerizing] 2 (682 aa).

Residue C2 is the For GATase activity of the active site. The Glutamine amidotransferase type-2 domain maps to 2-288 (CGIFAYMNYR…DDDIAAVADG (287 aa)). A Phosphoserine modification is found at S244. SIS domains are found at residues 360 to 499 (HLKE…DRIS) and 531 to 672 (LALE…VDFP). Substrate is bound by residues 377–378 (TS), 422–424 (SQS), T427, and H578.

Highest levels of expression in heart, placenta, and spinal cord.

It catalyses the reaction D-fructose 6-phosphate + L-glutamine = D-glucosamine 6-phosphate + L-glutamate. It functions in the pathway nucleotide-sugar biosynthesis; UDP-N-acetyl-alpha-D-glucosamine biosynthesis; alpha-D-glucosamine 6-phosphate from D-fructose 6-phosphate: step 1/1. Its function is as follows. Controls the flux of glucose into the hexosamine pathway. Most likely involved in regulating the availability of precursors for N- and O-linked glycosylation of proteins. The sequence is that of Glutamine--fructose-6-phosphate aminotransferase [isomerizing] 2 (GFPT2) from Homo sapiens (Human).